A 440-amino-acid polypeptide reads, in one-letter code: Transcription factor SOX-4 (440 aa).

The span at 1–10 (MVQQTNNAEN) shows a compositional bias: polar residues. Residues 1–58 (MVQQTNNAENTEALLAGESSDSGAGLELGIASSPTPGSTASTGGKADDPSWCKTPSGH) form a disordered region. Positions 31 to 44 (ASSPTPGSTASTGG) are enriched in low complexity. Positions 59–127 (IKRPMNAFMV…KHMADYPDYK (69 aa)) form a DNA-binding region, HMG box. Residue Lys95 is modified to N6-acetyllysine. Disordered stretches follow at residues 128–211 (YRPR…AAAS), 234–258 (PSAATPAASSSPSSALATPAKHPAD), and 272–382 (ASAS…NFES). Low complexity-rich tracts occupy residues 136 to 148 (SGNAGAGSAATAK), 157 to 166 (AGSSGHAGSS), 234 to 253 (PSAATPAASSSPSSALATPA), 304 to 322 (GRSLSGRSSAASSPAASRS), and 330 to 362 (ASLRAASPAPSSAPSHASSSLSSSSSSSSGSSS). Over residues 363-372 (SDDEFEDDLL) the composition is skewed to acidic residues. A compositionally biased stretch (low complexity) spans 373-382 (DLNPSSNFES). The short motif at 392–400 (SALDRDLDF) is the 9aaTAD element.

Interacts with UBE2I. Interacts with HDAC1; interaction inhibits the transcriptional activator activity. In terms of processing, acetylation at Lys-95 by KAT5 promotes the transcription activator activity and is required during myoblast differentiation. Acetylation by KAT5 abolishes the interaction between SOX4 and HDAC1 and switches SOX4 into a transcriptional activator. Expressed in both gamma-delta T-cells and Cd4+ Cd8+ double-positive (DP) alpha-beta T-cells. Expressed in the ovaries and the thymus.

It is found in the nucleus. In terms of biological role, transcriptional activator that binds with high affinity to the T-cell enhancer motif 5'-AACAAAG-3' motif. Required for IL17A-producing Vgamma2-positive gamma-delta T-cell maturation and development, via binding to regulator loci of RORC to modulate expression. Involved in skeletal myoblast differentiation by promoting gene expression of CALD1. In Mus musculus (Mouse), this protein is Transcription factor SOX-4.